The following is a 357-amino-acid chain: MLSLQTLAKKVVACNYLSSDYDYMLQRFGLWWDLGPIHLCNNCKQIFSYKHLQCFSEDDLCLEAALVKAVKSDNLELIRLFVDWGANPEYGLIRVPAVHLKRLCTELGGLTPVSEPRLLEILKEVAKLKSCAGVLLGYDMFCHNPLLETVTRTTLDTVTYTCSNIPLTGDTAHHLLTKFWFALALRHNFTKAIHYFYKRHKNHLYWRVACSLYFNNIFDIHELCREKEICISPNLMMKFACLRKKNYAAIYYCYRLGASLDYGMNLSIYNNNTLNMFFCIDLGATDFDRAQRIAHKTYMYNLSNIFLVKQLFSRDVTLALDVTEPQEIYDMLKSYTSKNLKRAEEYLTAHPEIIVID.

The protein belongs to the asfivirus MGF 360 family. In terms of assembly, interacts with host IRF3 and TRIM21; these interactions mediates degradation of IRF3 through TRIM21 and ubiquitin-meditated proteolysis.

Its subcellular location is the host cytoplasm. In terms of biological role, plays a role in virus cell tropism, and may be required for efficient virus replication in macrophages. Also inhibits the host cGAS/STING-mediated type I interferon production by inducing host IRF3 degradation through the proteasome pathway. This Ornithodoros (relapsing fever ticks) protein is Protein MGF 360-14L.